A 410-amino-acid chain; its full sequence is 3-phosphoshikimate 1-carboxyvinyltransferase (410 aa).

3-phosphoshikimate-binding residues include Lys-20, Ser-21, and Arg-25. Phosphoenolpyruvate is bound at residue Lys-20. Positions 87 and 115 each coordinate phosphoenolpyruvate. Residues Ser-157, Ser-158, Gln-159, Ser-183, Asp-293, and Lys-320 each coordinate 3-phosphoshikimate. Residue Gln-159 coordinates phosphoenolpyruvate. The active-site Proton acceptor is Asp-293. Phosphoenolpyruvate-binding residues include Arg-324, Arg-365, and Lys-391.

It belongs to the EPSP synthase family. Monomer.

Its subcellular location is the cytoplasm. It catalyses the reaction 3-phosphoshikimate + phosphoenolpyruvate = 5-O-(1-carboxyvinyl)-3-phosphoshikimate + phosphate. Its pathway is metabolic intermediate biosynthesis; chorismate biosynthesis. Its function is as follows. Catalyzes the transfer of the enolpyruvyl moiety of phosphoenolpyruvate (PEP) to the 5-hydroxyl of shikimate-3-phosphate (S3P) to produce enolpyruvyl shikimate-3-phosphate and inorganic phosphate. This chain is 3-phosphoshikimate 1-carboxyvinyltransferase, found in Thermoplasma volcanium (strain ATCC 51530 / DSM 4299 / JCM 9571 / NBRC 15438 / GSS1).